Reading from the N-terminus, the 226-residue chain is Urease accessory protein UreE (226 aa).

The interval 192–226 (PHGSGLHIHSIHSHGDGHSHDHDHSHGDHDSDHKH) is disordered. A compositionally biased stretch (basic and acidic residues) spans 204–226 (SHGDGHSHDHDHSHGDHDSDHKH).

This sequence belongs to the UreE family.

The protein resides in the cytoplasm. Its function is as follows. Involved in urease metallocenter assembly. Binds nickel. Probably functions as a nickel donor during metallocenter assembly. This is Urease accessory protein UreE from Yersinia intermedia.